The chain runs to 78 residues: Large ribosomal subunit protein bL28 (78 aa).

The span at 1–20 (MSRVCQLTGTRANNGMSVSH) shows a compositional bias: polar residues. A disordered region spans residues 1 to 23 (MSRVCQLTGTRANNGMSVSHSHI).

This sequence belongs to the bacterial ribosomal protein bL28 family.

In Prochlorococcus marinus (strain NATL2A), this protein is Large ribosomal subunit protein bL28.